A 458-amino-acid chain; its full sequence is GTPase Der (458 aa).

EngA-type G domains are found at residues 4–169 (PSIA…PKDL) and 178–353 (IMMS…TQHR). GTP is bound by residues 10–17 (GRPNVGKS), 57–61 (DTGGL), 120–123 (NKCE), 184–191 (GRPNVGKS), 231–235 (DTAGI), and 296–299 (NKWD). A KH-like domain is found at 354-439 (RRVTTSVVNE…PIILLWRGKQ (86 aa)).

The protein belongs to the TRAFAC class TrmE-Era-EngA-EngB-Septin-like GTPase superfamily. EngA (Der) GTPase family. As to quaternary structure, associates with the 50S ribosomal subunit.

GTPase that plays an essential role in the late steps of ribosome biogenesis. In Prochlorococcus marinus subsp. pastoris (strain CCMP1986 / NIES-2087 / MED4), this protein is GTPase Der.